A 340-amino-acid polypeptide reads, in one-letter code: Flavonoid 7-O-methyltransferase 1 (340 aa).

Residue D207 participates in S-adenosyl-L-methionine binding. The active-site Proton acceptor is H245.

Belongs to the class I-like SAM-binding methyltransferase superfamily. Cation-independent O-methyltransferase family. As to quaternary structure, homodimer. In terms of tissue distribution, expressed in leaves.

It catalyses the reaction (2S)-naringenin + S-adenosyl-L-methionine = (2S)-sakuranetin + S-adenosyl-L-homocysteine + H(+). It carries out the reaction scutellarein + S-adenosyl-L-methionine = scutellarein 7-methyl ether + S-adenosyl-L-homocysteine. The catalysed reaction is apigenin + S-adenosyl-L-methionine = genkwanin + S-adenosyl-L-homocysteine + H(+). The enzyme catalyses luteolin + S-adenosyl-L-methionine = luteolin 7-methyl ether + S-adenosyl-L-homocysteine + H(+). It catalyses the reaction chrysoeriol + S-adenosyl-L-methionine = velutin + S-adenosyl-L-homocysteine. It carries out the reaction diosmetin + S-adenosyl-L-methionine = luteolin 4',7-dimethyl ether + S-adenosyl-L-homocysteine. The catalysed reaction is acacetin + S-adenosyl-L-methionine = apigenin 4',7-dimethyl ether + S-adenosyl-L-homocysteine. The enzyme catalyses scutellarein 4'-methyl ether + S-adenosyl-L-methionine = ladanein + S-adenosyl-L-homocysteine. It participates in flavonoid metabolism. In terms of biological role, flavonoid 7-O-methyltransferase involved in the biosynthesis of polymethoxylated flavonoids natural products such as nevadensin and salvigenin, aroma compounds which contribute to the flavor of sweet basil, and exhibit pharmacological activities such as anti-allergic, anti-oxidant, antibacterial, anti-proliferative, and anti-inflammatory effects. Catalyzes S-adenosylmethionine-dependent regioselective 7-O-methylation of flavonoids; active on various hydroxylated flavonoid substrates, including apigenin (API) and luteolin (LUT), and, with a lower efficiency, scutellarein (SCU), naringenin (NAR), chrysoeriol (CHRYS), diosmetin (DIOS), acacetin (ACA) and scutellarein-7-methyl ether (SCU7Me). The chain is Flavonoid 7-O-methyltransferase 1 from Ocimum basilicum (Sweet basil).